The following is a 319-amino-acid chain: 4-diphosphocytidyl-2-C-methyl-D-erythritol kinase (319 aa).

Lysine 18 is a catalytic residue. Residue 103–113 coordinates ATP; it reads PIGAGLAGGST. Aspartate 145 is a catalytic residue.

It belongs to the GHMP kinase family. IspE subfamily.

The enzyme catalyses 4-CDP-2-C-methyl-D-erythritol + ATP = 4-CDP-2-C-methyl-D-erythritol 2-phosphate + ADP + H(+). It participates in isoprenoid biosynthesis; isopentenyl diphosphate biosynthesis via DXP pathway; isopentenyl diphosphate from 1-deoxy-D-xylulose 5-phosphate: step 3/6. In terms of biological role, catalyzes the phosphorylation of the position 2 hydroxy group of 4-diphosphocytidyl-2C-methyl-D-erythritol. The protein is 4-diphosphocytidyl-2-C-methyl-D-erythritol kinase of Prochlorococcus marinus (strain NATL2A).